Reading from the N-terminus, the 414-residue chain is uncharacterized protein (414 aa).

It belongs to the MG032/MG096/MG288 family.

This is an uncharacterized protein from Mycoplasma genitalium (strain ATCC 33530 / DSM 19775 / NCTC 10195 / G37) (Mycoplasmoides genitalium).